The following is a 1135-amino-acid chain: APC membrane recruitment protein 1 (1135 aa).

Position 1 is an N-acetylmethionine (M1). 7 disordered regions span residues 1–115 (METQ…EGTG), 156–308 (AEKF…VGDP), 339–405 (SMTD…EDDD), 447–484 (GLAP…DDSG), 736–764 (NFGG…KEGN), 921–948 (LQAQ…PLSL), and 1007–1135 (VPES…NLAK). The span at 10–19 (QAKGAAASGS) shows a compositional bias: low complexity. Residues 23–35 (QTAEKGAKNKAAE) show a composition bias toward basic and acidic residues. The segment covering 36-50 (ATEGPTSEPSSSGPG) has biased composition (low complexity). Residues 73–83 (FGGGRSKGSGK) show a composition bias toward gly residues. 2 stretches are compositionally biased toward basic and acidic residues: residues 94–107 (KTHD…HGPE) and 196–208 (GPER…HEHV). Residues 238-248 (KVSPTPEPSPP) show a composition bias toward pro residues. S246 is modified (phosphoserine). Composition is skewed to basic and acidic residues over residues 253 to 262 (MACKDPEKPM) and 282 to 291 (EEPHSPETGE). Residues 373-405 (ALPDDDDEEEEEEEEVELEEEEEEVKEEEEDDD) are compositionally biased toward acidic residues. Positions 455 to 466 (TPQSDQQESAPN) are enriched in polar residues. Residues 926-938 (EDSDEEDEEEEEG) show a composition bias toward acidic residues. Over residues 1058–1069 (PSCSSSSGGFSP) the composition is skewed to low complexity. Over residues 1119–1135 (SLATSYSSTAMNGNLAK) the composition is skewed to polar residues.

The protein belongs to the Amer family. As to quaternary structure, interacts with CTNNB1, AXIN1, LRP6, KEAP1, APC and BTRC. Interacts with SCF (SKP1-CUL1-F-box protein) E3 ubiquitin-protein ligase complexes containing BTRC and/or FBXW11. Identified in the beta-catenin destruction complex containing CTNNB1, APC, AXIN1 and AXIN2. Interacts with WT1. As to expression, detected in fetal and adult kidney, brain and spleen.

It is found in the cytoplasm. Its subcellular location is the cell membrane. The protein localises to the nucleus. Its function is as follows. Regulator of the canonical Wnt signaling pathway. Acts by specifically binding phosphatidylinositol 4,5-bisphosphate (PtdIns(4,5)P2), translocating to the cell membrane and interacting with key regulators of the canonical Wnt signaling pathway, such as components of the beta-catenin destruction complex. Acts both as a positive and negative regulator of the Wnt signaling pathway, depending on the context: acts as a positive regulator by promoting LRP6 phosphorylation. Also acts as a negative regulator by acting as a scaffold protein for the beta-catenin destruction complex and promoting stabilization of Axin at the cell membrane. Promotes CTNNB1 ubiquitination and degradation. Involved in kidney development. This chain is APC membrane recruitment protein 1 (AMER1), found in Homo sapiens (Human).